Consider the following 255-residue polypeptide: 3-deoxy-manno-octulosonate cytidylyltransferase (255 aa).

The protein belongs to the KdsB family.

The protein resides in the cytoplasm. The enzyme catalyses 3-deoxy-alpha-D-manno-oct-2-ulosonate + CTP = CMP-3-deoxy-beta-D-manno-octulosonate + diphosphate. It participates in nucleotide-sugar biosynthesis; CMP-3-deoxy-D-manno-octulosonate biosynthesis; CMP-3-deoxy-D-manno-octulosonate from 3-deoxy-D-manno-octulosonate and CTP: step 1/1. The protein operates within bacterial outer membrane biogenesis; lipopolysaccharide biosynthesis. In terms of biological role, activates KDO (a required 8-carbon sugar) for incorporation into bacterial lipopolysaccharide in Gram-negative bacteria. This is 3-deoxy-manno-octulosonate cytidylyltransferase from Glaesserella parasuis serovar 5 (strain SH0165) (Haemophilus parasuis).